The primary structure comprises 360 residues: Phosphoserine aminotransferase (360 aa).

An L-glutamate-binding site is contributed by Arg41. Pyridoxal 5'-phosphate contacts are provided by residues 75-76 (AS), Trp101, Thr151, Asp171, and Gln194. At Lys195 the chain carries N6-(pyridoxal phosphate)lysine. 236–237 (NT) is a pyridoxal 5'-phosphate binding site.

This sequence belongs to the class-V pyridoxal-phosphate-dependent aminotransferase family. SerC subfamily. Homodimer. It depends on pyridoxal 5'-phosphate as a cofactor.

It is found in the cytoplasm. The catalysed reaction is O-phospho-L-serine + 2-oxoglutarate = 3-phosphooxypyruvate + L-glutamate. The enzyme catalyses 4-(phosphooxy)-L-threonine + 2-oxoglutarate = (R)-3-hydroxy-2-oxo-4-phosphooxybutanoate + L-glutamate. It functions in the pathway amino-acid biosynthesis; L-serine biosynthesis; L-serine from 3-phospho-D-glycerate: step 2/3. Its pathway is cofactor biosynthesis; pyridoxine 5'-phosphate biosynthesis; pyridoxine 5'-phosphate from D-erythrose 4-phosphate: step 3/5. In terms of biological role, catalyzes the reversible conversion of 3-phosphohydroxypyruvate to phosphoserine and of 3-hydroxy-2-oxo-4-phosphonooxybutanoate to phosphohydroxythreonine. The polypeptide is Phosphoserine aminotransferase (Herpetosiphon aurantiacus (strain ATCC 23779 / DSM 785 / 114-95)).